The following is a 427-amino-acid chain: 3-phosphoshikimate 1-carboxyvinyltransferase (427 aa).

Residues Lys-22, Ser-23, and Arg-27 each contribute to the 3-phosphoshikimate site. Position 22 (Lys-22) interacts with phosphoenolpyruvate. Gly-96 and Arg-124 together coordinate phosphoenolpyruvate. 3-phosphoshikimate contacts are provided by Ser-170, Ser-171, Gln-172, Ser-198, Asp-313, Asn-336, and Lys-340. Gln-172 serves as a coordination point for phosphoenolpyruvate. Residue Asp-313 is the Proton acceptor of the active site. Phosphoenolpyruvate is bound by residues Arg-344, Arg-386, and Lys-411.

It belongs to the EPSP synthase family. In terms of assembly, monomer.

It localises to the cytoplasm. The catalysed reaction is 3-phosphoshikimate + phosphoenolpyruvate = 5-O-(1-carboxyvinyl)-3-phosphoshikimate + phosphate. It participates in metabolic intermediate biosynthesis; chorismate biosynthesis; chorismate from D-erythrose 4-phosphate and phosphoenolpyruvate: step 6/7. Functionally, catalyzes the transfer of the enolpyruvyl moiety of phosphoenolpyruvate (PEP) to the 5-hydroxyl of shikimate-3-phosphate (S3P) to produce enolpyruvyl shikimate-3-phosphate and inorganic phosphate. The protein is 3-phosphoshikimate 1-carboxyvinyltransferase of Aeromonas salmonicida (strain A449).